The following is a 294-amino-acid chain: Flagellin B1 (294 aa).

Residues 1–8 (MKTRTRKG) constitute a propeptide that is removed on maturation.

It belongs to the archaeal flagellin family.

Its subcellular location is the archaeal flagellum. Its function is as follows. Flagellin is the subunit protein which polymerizes to form the filaments of archaeal flagella. In Thermococcus kodakarensis (strain ATCC BAA-918 / JCM 12380 / KOD1) (Pyrococcus kodakaraensis (strain KOD1)), this protein is Flagellin B1 (flaB1).